Consider the following 140-residue polypeptide: MAQSSGHVSYVAVTVPIAIVMTVLCLFLANAVTYARRPTTYIVGGDDGWDPVVPMDTWARGKTFYAGDILEFKYDYQRFNLIVVNRTGYETCEANVGAIEYSSGDDKIQLNYGYNYFIGTYTPEDCTTGLKMAIKALAPR.

The first 28 residues, 1 to 28 (MAQSSGHVSYVAVTVPIAIVMTVLCLFL), serve as a signal peptide directing secretion. One can recognise a Phytocyanin domain in the interval 39–138 (TTYIVGGDDG…GLKMAIKALA (100 aa)). The N-linked (GlcNAc...) asparagine glycan is linked to N85. Residues C92 and C126 are joined by a disulfide bond.

This sequence belongs to the early nodulin-like (ENODL) family.

Functionally, may act as a carbohydrate transporter. The polypeptide is Early nodulin-like protein 22 (Arabidopsis thaliana (Mouse-ear cress)).